The sequence spans 209 residues: Uracil phosphoribosyltransferase (209 aa).

5-phospho-alpha-D-ribose 1-diphosphate-binding positions include Arg79, Arg104, and 131-139 (DPMLATGNS). Uracil contacts are provided by residues Ile194 and 199-201 (GDA). Asp200 lines the 5-phospho-alpha-D-ribose 1-diphosphate pocket.

The protein belongs to the UPRTase family. Mg(2+) is required as a cofactor.

It carries out the reaction UMP + diphosphate = 5-phospho-alpha-D-ribose 1-diphosphate + uracil. Its pathway is pyrimidine metabolism; UMP biosynthesis via salvage pathway; UMP from uracil: step 1/1. Allosterically activated by GTP. Its function is as follows. Catalyzes the conversion of uracil and 5-phospho-alpha-D-ribose 1-diphosphate (PRPP) to UMP and diphosphate. This chain is Uracil phosphoribosyltransferase, found in Acidovorax ebreus (strain TPSY) (Diaphorobacter sp. (strain TPSY)).